Here is a 726-residue protein sequence, read N- to C-terminus: Catalase-peroxidase (726 aa).

Positions Met-1–Thr-33 are disordered. The segment at residues Trp-105–Tyr-226 is a cross-link (tryptophyl-tyrosyl-methioninium (Trp-Tyr) (with M-252)). Catalysis depends on His-106, which acts as the Proton acceptor. A cross-link (tryptophyl-tyrosyl-methioninium (Tyr-Met) (with W-105)) is located at residues Tyr-226–Met-252. Heme b is bound at residue His-267.

The protein belongs to the peroxidase family. Peroxidase/catalase subfamily. As to quaternary structure, homodimer or homotetramer. Requires heme b as cofactor. Post-translationally, formation of the three residue Trp-Tyr-Met cross-link is important for the catalase, but not the peroxidase activity of the enzyme.

The enzyme catalyses H2O2 + AH2 = A + 2 H2O. It carries out the reaction 2 H2O2 = O2 + 2 H2O. Its function is as follows. Bifunctional enzyme with both catalase and broad-spectrum peroxidase activity. The sequence is that of Catalase-peroxidase from Escherichia coli O1:K1 / APEC.